Consider the following 352-residue polypeptide: UDP-3-O-acylglucosamine N-acyltransferase (352 aa).

Residue His-246 is the Proton acceptor of the active site.

The protein belongs to the transferase hexapeptide repeat family. LpxD subfamily. Homotrimer.

It catalyses the reaction a UDP-3-O-[(3R)-3-hydroxyacyl]-alpha-D-glucosamine + a (3R)-hydroxyacyl-[ACP] = a UDP-2-N,3-O-bis[(3R)-3-hydroxyacyl]-alpha-D-glucosamine + holo-[ACP] + H(+). Its pathway is bacterial outer membrane biogenesis; LPS lipid A biosynthesis. Its function is as follows. Catalyzes the N-acylation of UDP-3-O-acylglucosamine using 3-hydroxyacyl-ACP as the acyl donor. Is involved in the biosynthesis of lipid A, a phosphorylated glycolipid that anchors the lipopolysaccharide to the outer membrane of the cell. The polypeptide is UDP-3-O-acylglucosamine N-acyltransferase (Chlorobium luteolum (strain DSM 273 / BCRC 81028 / 2530) (Pelodictyon luteolum)).